The chain runs to 315 residues: Acetyl-coenzyme A carboxylase carboxyl transferase subunit alpha (315 aa).

The region spanning 32–289 is the CoA carboxyltransferase C-terminal domain; sequence EIDMLEASLE…KEAFTKQLSE (258 aa).

It belongs to the AccA family. As to quaternary structure, acetyl-CoA carboxylase is a heterohexamer composed of biotin carboxyl carrier protein (AccB), biotin carboxylase (AccC) and two subunits each of ACCase subunit alpha (AccA) and ACCase subunit beta (AccD).

It is found in the cytoplasm. It catalyses the reaction N(6)-carboxybiotinyl-L-lysyl-[protein] + acetyl-CoA = N(6)-biotinyl-L-lysyl-[protein] + malonyl-CoA. The protein operates within lipid metabolism; malonyl-CoA biosynthesis; malonyl-CoA from acetyl-CoA: step 1/1. In terms of biological role, component of the acetyl coenzyme A carboxylase (ACC) complex. First, biotin carboxylase catalyzes the carboxylation of biotin on its carrier protein (BCCP) and then the CO(2) group is transferred by the carboxyltransferase to acetyl-CoA to form malonyl-CoA. This is Acetyl-coenzyme A carboxylase carboxyl transferase subunit alpha from Staphylococcus carnosus (strain TM300).